We begin with the raw amino-acid sequence, 441 residues long: UDP-N-acetylglucosamine 1-carboxyvinyltransferase 1 (441 aa).

42–43 contributes to the phosphoenolpyruvate binding site; sequence KN. Position 117 (Arg117) interacts with UDP-N-acetyl-alpha-D-glucosamine. The Proton donor role is filled by Cys141. Cys141 carries the 2-(S-cysteinyl)pyruvic acid O-phosphothioketal modification. The UDP-N-acetyl-alpha-D-glucosamine site is built by Asp330 and Ile352.

It belongs to the EPSP synthase family. MurA subfamily.

The protein resides in the cytoplasm. The enzyme catalyses phosphoenolpyruvate + UDP-N-acetyl-alpha-D-glucosamine = UDP-N-acetyl-3-O-(1-carboxyvinyl)-alpha-D-glucosamine + phosphate. It participates in cell wall biogenesis; peptidoglycan biosynthesis. In terms of biological role, cell wall formation. Adds enolpyruvyl to UDP-N-acetylglucosamine. This Symbiobacterium thermophilum (strain DSM 24528 / JCM 14929 / IAM 14863 / T) protein is UDP-N-acetylglucosamine 1-carboxyvinyltransferase 1.